The primary structure comprises 89 residues: Large ribosomal subunit protein bL27 (89 aa).

Positions methionine 1–leucine 21 are disordered.

This sequence belongs to the bacterial ribosomal protein bL27 family.

The sequence is that of Large ribosomal subunit protein bL27 from Granulibacter bethesdensis (strain ATCC BAA-1260 / CGDNIH1).